We begin with the raw amino-acid sequence, 316 residues long: Transaldolase (316 aa).

Lys132 serves as the catalytic Schiff-base intermediate with substrate.

Belongs to the transaldolase family. Type 1 subfamily. In terms of assembly, homodimer.

It is found in the cytoplasm. The catalysed reaction is D-sedoheptulose 7-phosphate + D-glyceraldehyde 3-phosphate = D-erythrose 4-phosphate + beta-D-fructose 6-phosphate. It functions in the pathway carbohydrate degradation; pentose phosphate pathway; D-glyceraldehyde 3-phosphate and beta-D-fructose 6-phosphate from D-ribose 5-phosphate and D-xylulose 5-phosphate (non-oxidative stage): step 2/3. Transaldolase is important for the balance of metabolites in the pentose-phosphate pathway. The polypeptide is Transaldolase (Aeromonas salmonicida (strain A449)).